The chain runs to 475 residues: tRNA (guanine(37)-N(1))-methyltransferase (475 aa).

Residues His-219, 258 to 259 (DL), and 286 to 287 (DG) each bind S-adenosyl-L-methionine. The disordered stretch occupies residues 306–328 (KITKQKPTSNDKKRNRKVESPTV). S-adenosyl-L-methionine is bound at residue Asn-349. A compositionally biased stretch (polar residues) spans 456–469 (NLVSQSDVSKSSDN). The segment at 456–475 (NLVSQSDVSKSSDNILEKDT) is disordered.

Belongs to the class I-like SAM-binding methyltransferase superfamily. TRM5/TYW2 family. As to quaternary structure, monomer.

Its subcellular location is the mitochondrion matrix. The protein resides in the nucleus. The protein localises to the cytoplasm. It catalyses the reaction guanosine(37) in tRNA + S-adenosyl-L-methionine = N(1)-methylguanosine(37) in tRNA + S-adenosyl-L-homocysteine + H(+). In terms of biological role, specifically methylates the N1 position of guanosine-37 in various cytoplasmic and mitochondrial tRNAs. Methylation is not dependent on the nature of the nucleoside 5' of the target nucleoside. This is the first step in the biosynthesis of wybutosine (yW), a modified base adjacent to the anticodon of tRNAs and required for accurate decoding. The protein is tRNA (guanine(37)-N(1))-methyltransferase of Batrachochytrium dendrobatidis (strain JAM81 / FGSC 10211) (Frog chytrid fungus).